Reading from the N-terminus, the 384-residue chain is Putative pectate lyase 2 (384 aa).

A signal peptide spans 1-23 (MASLFLTIISLLFAAFSSSVVEA). Residues Asp182, Asp206, and Asp210 each contribute to the Ca(2+) site. Arg262 is an active-site residue.

The protein belongs to the polysaccharide lyase 1 family. It depends on Ca(2+) as a cofactor.

The catalysed reaction is Eliminative cleavage of (1-&gt;4)-alpha-D-galacturonan to give oligosaccharides with 4-deoxy-alpha-D-galact-4-enuronosyl groups at their non-reducing ends.. It functions in the pathway glycan metabolism; pectin degradation; 2-dehydro-3-deoxy-D-gluconate from pectin: step 2/5. This Arabidopsis thaliana (Mouse-ear cress) protein is Putative pectate lyase 2.